The chain runs to 231 residues: Large ribosomal subunit protein uL1 (231 aa).

The protein belongs to the universal ribosomal protein uL1 family. As to quaternary structure, part of the 50S ribosomal subunit.

Functionally, binds directly to 23S rRNA. The L1 stalk is quite mobile in the ribosome, and is involved in E site tRNA release. Protein L1 is also a translational repressor protein, it controls the translation of the L11 operon by binding to its mRNA. The protein is Large ribosomal subunit protein uL1 of Acinetobacter baumannii (strain AB307-0294).